The sequence spans 130 residues: Arsenical-resistance protein 2 (130 aa).

In terms of domain architecture, Rhodanese spans 17-124 (QRKDFQVVDL…WETHCRESNL (108 aa)).

Its function is as follows. Involved in resistance to arsenic compounds. The sequence is that of Arsenical-resistance protein 2 (ARR2) from Saccharomyces cerevisiae (strain ATCC 204508 / S288c) (Baker's yeast).